The sequence spans 279 residues: Dermonecrotic toxin LbSicTox-alphaIB1a (279 aa).

Histidine 11 is an active-site residue. 2 residues coordinate Mg(2+): glutamate 31 and aspartate 33. Histidine 47 serves as the catalytic Nucleophile. Cystine bridges form between cysteine 51–cysteine 57 and cysteine 53–cysteine 196. Aspartate 91 lines the Mg(2+) pocket.

This sequence belongs to the arthropod phospholipase D family. Class II subfamily. Class IIa sub-subfamily. It depends on Mg(2+) as a cofactor. Expressed by the venom gland.

It is found in the secreted. The catalysed reaction is an N-(acyl)-sphingosylphosphocholine = an N-(acyl)-sphingosyl-1,3-cyclic phosphate + choline. It carries out the reaction an N-(acyl)-sphingosylphosphoethanolamine = an N-(acyl)-sphingosyl-1,3-cyclic phosphate + ethanolamine. It catalyses the reaction a 1-acyl-sn-glycero-3-phosphocholine = a 1-acyl-sn-glycero-2,3-cyclic phosphate + choline. The enzyme catalyses a 1-acyl-sn-glycero-3-phosphoethanolamine = a 1-acyl-sn-glycero-2,3-cyclic phosphate + ethanolamine. In terms of biological role, dermonecrotic toxins cleave the phosphodiester linkage between the phosphate and headgroup of certain phospholipids (sphingolipid and lysolipid substrates), forming an alcohol (often choline) and a cyclic phosphate. This toxin acts on sphingomyelin (SM) with high activity (about 30.5-31.5 U/mg). It may also act on ceramide phosphoethanolamine (CPE), lysophosphatidylcholine (LPC) and lysophosphatidylethanolamine (LPE), but not on lysophosphatidylserine (LPS), and lysophosphatidylglycerol (LPG). It acts by transphosphatidylation, releasing exclusively cyclic phosphate products as second products. Induces dermonecrosis, hemolysis, increased vascular permeability, edema, inflammatory response, and platelet aggregation. Is lethal to mice. This chain is Dermonecrotic toxin LbSicTox-alphaIB1a, found in Loxosceles boneti (North American fiddleback spider).